Here is a 110-residue protein sequence, read N- to C-terminus: MALWMRLLPLLALLALWGPDPAQAFVNQHLCGSHLVEALYLVCGERGFFYTPKTRREAEDLQVGQVELGGGPGAGSLQPLALEGSLQKRGIVEQCCTSICSLYQLENYCN.

The N-terminal stretch at 1–24 is a signal peptide; sequence MALWMRLLPLLALLALWGPDPAQA. Intrachain disulfides connect C31–C96, C43–C109, and C95–C100. Positions 57-87 are cleaved as a propeptide — c peptide; it reads EAEDLQVGQVELGGGPGAGSLQPLALEGSLQ.

This sequence belongs to the insulin family. As to quaternary structure, heterodimer of a B chain and an A chain linked by two disulfide bonds.

It is found in the secreted. Insulin decreases blood glucose concentration. It increases cell permeability to monosaccharides, amino acids and fatty acids. It accelerates glycolysis, the pentose phosphate cycle, and glycogen synthesis in liver. This is Insulin (INS) from Pongo pygmaeus (Bornean orangutan).